The primary structure comprises 148 residues: Lysozyme C-3 (148 aa).

Positions 1–18 (MKTLLVLALLLLSVSVQA) are cleaved as a signal peptide. The 130-residue stretch at 19–148 (KVYDRCEFAR…VSQYIRGCKL (130 aa)) folds into the C-type lysozyme domain. 4 disulfide bridges follow: C24-C146, C48-C134, C83-C99, and C95-C113. Residues E53 and D71 contribute to the active site.

This sequence belongs to the glycosyl hydrolase 22 family. In terms of assembly, monomer.

Its subcellular location is the secreted. The enzyme catalyses Hydrolysis of (1-&gt;4)-beta-linkages between N-acetylmuramic acid and N-acetyl-D-glucosamine residues in a peptidoglycan and between N-acetyl-D-glucosamine residues in chitodextrins.. Its function is as follows. Lysozymes have primarily a bacteriolytic function; those in tissues and body fluids are associated with the monocyte-macrophage system and enhance the activity of immunoagents. This chain is Lysozyme C-3, found in Sus scrofa (Pig).